We begin with the raw amino-acid sequence, 141 residues long: Arsenate reductase (141 aa).

C12 (nucleophile; cysteine thioarsenate intermediate) is an active-site residue.

The protein belongs to the ArsC family. In terms of assembly, monomer in solution.

It catalyses the reaction [glutaredoxin]-dithiol + arsenate + glutathione + H(+) = glutathionyl-S-S-[glutaredoxin] + arsenite + H2O. Its activity is regulated as follows. Inhibited by the thiol reagents iodoacetate (IAA) and N-ethylmaleimide (NEM). Activity is rapidly inactivated by the histidine-modifying reagent diethylpyrocarbonate (DEPC). Functionally, involved in resistance to arsenate. Catalyzes the reduction of arsenate [As(V)] to arsenite [As(III)]. The resulting arsenite is then extruded from the cell via the ArsAB transport system. This chain is Arsenate reductase, found in Escherichia coli.